The chain runs to 302 residues: Protein transport protein SEC13 homolog A (302 aa).

6 WD repeats span residues 9–48 (GHSD…GSQH), 54–95 (GHRG…QWTQ), 101–142 (DHKV…GWDT), 148–201 (AHPV…WKMD), 208–251 (KHTD…EQWE), and 257–296 (DFKT…EWEQ).

This sequence belongs to the WD repeat SEC13 family. In terms of assembly, interacts with MAG5, SEC31A and SEC31B.

It localises to the golgi apparatus. The protein localises to the endoplasmic reticulum. Required for protein transport from the endoplasmic reticulum to the Golgi apparatus. The protein is Protein transport protein SEC13 homolog A of Arabidopsis thaliana (Mouse-ear cress).